The following is a 134-amino-acid chain: Arsenate reductase (134 aa).

Residues cysteine 11, cysteine 83, and cysteine 90 each act as nucleophile in the active site. Disulfide bonds link cysteine 11–cysteine 83 and cysteine 83–cysteine 90.

The protein belongs to the low molecular weight phosphotyrosine protein phosphatase family. Thioredoxin-coupled ArsC subfamily.

It localises to the cytoplasm. It catalyses the reaction arsenate + [thioredoxin]-dithiol + H(+) = arsenite + [thioredoxin]-disulfide + H2O. In terms of biological role, catalyzes the reduction of arsenate [As(V)] to arsenite [As(III)]. This is Arsenate reductase from Bacillus cereus (strain G9842).